Reading from the N-terminus, the 591-residue chain is Aspartate--tRNA ligase (591 aa).

Glu-173 contacts L-aspartate. Residues 197-200 (QLFK) form an aspartate region. Arg-219 is an L-aspartate binding site. ATP is bound by residues 219 to 221 (RDE) and Gln-228. His-448 is an L-aspartate binding site. Glu-482 provides a ligand contact to ATP. Residue Arg-489 coordinates L-aspartate. Position 534–537 (534–537 (GLDR)) interacts with ATP.

Belongs to the class-II aminoacyl-tRNA synthetase family. Type 1 subfamily. Homodimer.

Its subcellular location is the cytoplasm. It carries out the reaction tRNA(Asp) + L-aspartate + ATP = L-aspartyl-tRNA(Asp) + AMP + diphosphate. Catalyzes the attachment of L-aspartate to tRNA(Asp) in a two-step reaction: L-aspartate is first activated by ATP to form Asp-AMP and then transferred to the acceptor end of tRNA(Asp). This Shewanella oneidensis (strain ATCC 700550 / JCM 31522 / CIP 106686 / LMG 19005 / NCIMB 14063 / MR-1) protein is Aspartate--tRNA ligase.